The following is a 567-amino-acid chain: Proline--tRNA ligase (567 aa).

The protein belongs to the class-II aminoacyl-tRNA synthetase family. ProS type 1 subfamily. Homodimer.

It localises to the cytoplasm. It catalyses the reaction tRNA(Pro) + L-proline + ATP = L-prolyl-tRNA(Pro) + AMP + diphosphate. Its function is as follows. Catalyzes the attachment of proline to tRNA(Pro) in a two-step reaction: proline is first activated by ATP to form Pro-AMP and then transferred to the acceptor end of tRNA(Pro). As ProRS can inadvertently accommodate and process non-cognate amino acids such as alanine and cysteine, to avoid such errors it has two additional distinct editing activities against alanine. One activity is designated as 'pretransfer' editing and involves the tRNA(Pro)-independent hydrolysis of activated Ala-AMP. The other activity is designated 'posttransfer' editing and involves deacylation of mischarged Ala-tRNA(Pro). The misacylated Cys-tRNA(Pro) is not edited by ProRS. This Geobacillus sp. (strain WCH70) protein is Proline--tRNA ligase.